Reading from the N-terminus, the 401-residue chain is L-rhamnonate dehydratase (401 aa).

Residues His-29 and Arg-55 each contribute to the substrate site. Mg(2+)-binding residues include Asp-222, Glu-248, and Glu-276. His-325 acts as the Proton acceptor in catalysis. Glu-345 provides a ligand contact to substrate.

It belongs to the mandelate racemase/muconate lactonizing enzyme family. RhamD subfamily. Homooctamer; tetramer of dimers. The cofactor is Mg(2+).

The enzyme catalyses L-rhamnonate = 2-dehydro-3-deoxy-L-rhamnonate + H2O. Functionally, catalyzes the dehydration of L-rhamnonate to 2-keto-3-deoxy-L-rhamnonate (KDR). In Klebsiella pneumoniae (strain 342), this protein is L-rhamnonate dehydratase.